The sequence spans 123 residues: Small ribosomal subunit protein uS12 (123 aa).

Aspartate 89 is subject to 3-methylthioaspartic acid. The disordered stretch occupies residues 100 to 123; it reads GSLDTSGVKDRKQGRSKYGAKRPK. The span at 113 to 123 shows a compositional bias: basic residues; it reads GRSKYGAKRPK.

Belongs to the universal ribosomal protein uS12 family. As to quaternary structure, part of the 30S ribosomal subunit. Contacts proteins S8 and S17. May interact with IF1 in the 30S initiation complex.

In terms of biological role, with S4 and S5 plays an important role in translational accuracy. Interacts with and stabilizes bases of the 16S rRNA that are involved in tRNA selection in the A site and with the mRNA backbone. Located at the interface of the 30S and 50S subunits, it traverses the body of the 30S subunit contacting proteins on the other side and probably holding the rRNA structure together. The combined cluster of proteins S8, S12 and S17 appears to hold together the shoulder and platform of the 30S subunit. The sequence is that of Small ribosomal subunit protein uS12 from Pseudomonas aeruginosa (strain LESB58).